A 306-amino-acid polypeptide reads, in one-letter code: Aspartate carbamoyltransferase catalytic subunit (306 aa).

Carbamoyl phosphate is bound by residues arginine 54 and threonine 55. Lysine 83 lines the L-aspartate pocket. Arginine 104, histidine 132, and glutamine 135 together coordinate carbamoyl phosphate. Residues arginine 165 and arginine 227 each contribute to the L-aspartate site. Carbamoyl phosphate contacts are provided by leucine 266 and proline 267.

Belongs to the aspartate/ornithine carbamoyltransferase superfamily. ATCase family. Heterododecamer (2C3:3R2) of six catalytic PyrB chains organized as two trimers (C3), and six regulatory PyrI chains organized as three dimers (R2).

It carries out the reaction carbamoyl phosphate + L-aspartate = N-carbamoyl-L-aspartate + phosphate + H(+). The protein operates within pyrimidine metabolism; UMP biosynthesis via de novo pathway; (S)-dihydroorotate from bicarbonate: step 2/3. Its function is as follows. Catalyzes the condensation of carbamoyl phosphate and aspartate to form carbamoyl aspartate and inorganic phosphate, the committed step in the de novo pyrimidine nucleotide biosynthesis pathway. The sequence is that of Aspartate carbamoyltransferase catalytic subunit from Clostridium novyi (strain NT).